The following is a 603-amino-acid chain: Serine palmitoyltransferase 2 (603 aa).

A helical transmembrane segment spans residues 90-107 (YYYVVATYLTYLVLIIIG). Position 398 is an N6-(pyridoxal phosphate)lysine (Lys398).

It belongs to the class-II pyridoxal-phosphate-dependent aminotransferase family. Lcb1 and lcb2 encode essential subunits of the enzyme and form a heterodimer. Pyridoxal 5'-phosphate is required as a cofactor.

The protein resides in the cytoplasm. The protein localises to the endoplasmic reticulum. It localises to the membrane. The enzyme catalyses L-serine + hexadecanoyl-CoA + H(+) = 3-oxosphinganine + CO2 + CoA. The protein operates within lipid metabolism; sphingolipid metabolism. In terms of biological role, catalytic subunit of serine palmitoyltransferase (SPT), which catalyzes the committed step in the synthesis of sphingolipids, the condensation of serine with palmitoyl CoA to form the long chain base 3-ketosphinganine. The sequence is that of Serine palmitoyltransferase 2 (lcb2) from Schizosaccharomyces pombe (strain 972 / ATCC 24843) (Fission yeast).